The primary structure comprises 70 residues: Cytochrome c oxidase subunit 8B, mitochondrial (70 aa).

The transit peptide at M1–H24 directs the protein to the mitochondrion. Residues V25–S35 lie on the Mitochondrial matrix side of the membrane. A helical transmembrane segment spans residues P36–S59. The Mitochondrial intermembrane portion of the chain corresponds to H60–T70.

Belongs to the cytochrome c oxidase VIII family. Component of the cytochrome c oxidase (complex IV, CIV), a multisubunit enzyme composed of 14 subunits. The complex is composed of a catalytic core of 3 subunits MT-CO1, MT-CO2 and MT-CO3, encoded in the mitochondrial DNA, and 11 supernumerary subunits COX4I, COX5A, COX5B, COX6A, COX6B, COX6C, COX7A, COX7B, COX7C, COX8 and NDUFA4, which are encoded in the nuclear genome. The complex exists as a monomer or a dimer and forms supercomplexes (SCs) in the inner mitochondrial membrane with NADH-ubiquinone oxidoreductase (complex I, CI) and ubiquinol-cytochrome c oxidoreductase (cytochrome b-c1 complex, complex III, CIII), resulting in different assemblies (supercomplex SCI(1)III(2)IV(1) and megacomplex MCI(2)III(2)IV(2)).

Its subcellular location is the mitochondrion inner membrane. It functions in the pathway energy metabolism; oxidative phosphorylation. Component of the cytochrome c oxidase, the last enzyme in the mitochondrial electron transport chain which drives oxidative phosphorylation. The respiratory chain contains 3 multisubunit complexes succinate dehydrogenase (complex II, CII), ubiquinol-cytochrome c oxidoreductase (cytochrome b-c1 complex, complex III, CIII) and cytochrome c oxidase (complex IV, CIV), that cooperate to transfer electrons derived from NADH and succinate to molecular oxygen, creating an electrochemical gradient over the inner membrane that drives transmembrane transport and the ATP synthase. Cytochrome c oxidase is the component of the respiratory chain that catalyzes the reduction of oxygen to water. Electrons originating from reduced cytochrome c in the intermembrane space (IMS) are transferred via the dinuclear copper A center (CU(A)) of subunit 2 and heme A of subunit 1 to the active site in subunit 1, a binuclear center (BNC) formed by heme A3 and copper B (CU(B)). The BNC reduces molecular oxygen to 2 water molecules using 4 electrons from cytochrome c in the IMS and 4 protons from the mitochondrial matrix. The sequence is that of Cytochrome c oxidase subunit 8B, mitochondrial (COX8B) from Carlito syrichta (Philippine tarsier).